A 709-amino-acid chain; its full sequence is PP2C-like domain-containing protein CG9801 (709 aa).

3 disordered regions span residues 121 to 222, 503 to 530, and 678 to 709; these read DCYG…NSER, LHPSTPPTRPARQSKAESPPNNAPSRPK, and GGGEEHNNGNENGDGGAISPVLQSKEFKETNF. Residues 130 to 143 show a composition bias toward polar residues; the sequence is PPVQVATQNSTRLT. The span at 182–196 shows a compositional bias: low complexity; that stretch reads ANLAAASAGTDAGKA. Residues 197-217 are compositionally biased toward polar residues; that stretch reads NSDQNNRNVLNAKTEVSTDGD. Positions 259-503 constitute a PPM-type phosphatase domain; that stretch reads SVSLYETNML…KSASAIYARL (245 aa).

This chain is PP2C-like domain-containing protein CG9801, found in Drosophila melanogaster (Fruit fly).